A 249-amino-acid chain; its full sequence is 2,3-bisphosphoglycerate-dependent phosphoglycerate mutase (249 aa).

Substrate contacts are provided by residues 9–16 (RHGQSQWN), 22–23 (TG), Arg61, 88–91 (ERHY), Lys99, 115–116 (RR), and 184–185 (GN). The active-site Tele-phosphohistidine intermediate is His10. The Proton donor/acceptor role is filled by Glu88.

This sequence belongs to the phosphoglycerate mutase family. BPG-dependent PGAM subfamily. In terms of assembly, homodimer.

It carries out the reaction (2R)-2-phosphoglycerate = (2R)-3-phosphoglycerate. The protein operates within carbohydrate degradation; glycolysis; pyruvate from D-glyceraldehyde 3-phosphate: step 3/5. In terms of biological role, catalyzes the interconversion of 2-phosphoglycerate and 3-phosphoglycerate. This Xylella fastidiosa (strain M23) protein is 2,3-bisphosphoglycerate-dependent phosphoglycerate mutase.